The chain runs to 267 residues: Tryptophan synthase alpha chain (267 aa).

Catalysis depends on proton acceptor residues Glu-49 and Asp-60.

The protein belongs to the TrpA family. As to quaternary structure, tetramer of two alpha and two beta chains.

It catalyses the reaction (1S,2R)-1-C-(indol-3-yl)glycerol 3-phosphate + L-serine = D-glyceraldehyde 3-phosphate + L-tryptophan + H2O. The protein operates within amino-acid biosynthesis; L-tryptophan biosynthesis; L-tryptophan from chorismate: step 5/5. Its function is as follows. The alpha subunit is responsible for the aldol cleavage of indoleglycerol phosphate to indole and glyceraldehyde 3-phosphate. The polypeptide is Tryptophan synthase alpha chain (Citrifermentans bemidjiense (strain ATCC BAA-1014 / DSM 16622 / JCM 12645 / Bem) (Geobacter bemidjiensis)).